Reading from the N-terminus, the 563-residue chain is Grainyhead-like protein 1 homolog (563 aa).

In terms of domain architecture, Grh/CP2 DB spans 194–428; it reads NNLGFQYVLE…ELDKPAALFI (235 aa). 2 interaction with DNA regions span residues 326-335 and 372-375; these read TDFSTQKGVK and RKLR. The tract at residues 377–405 is disordered; sequence EDKRAQKRKVQEYTAGALPGGRKKSDGEY.

The protein belongs to the grh/CP2 family. Grainyhead subfamily.

The protein resides in the nucleus. Functionally, probable transcription factor. Binds a motif with the core sequence 5'-C[ACT][TG]G-3' in regulatory elements of target genes. Many putative target genes show oscillating expression levels, perhaps as a result of rhythmic variation in accumulation of grh-1. Plays a role in proper cuticle formation and/or barrier function and is required repetitively during development, for successful completion of each molt. Involved in modulating lifespan. Plays a role in defense response to bacteria. May act upstream of the p38 MAP kinase / pmk-1 pathway. May act downstream of the insulin/IGF-1 receptor signaling (IIS) pathway. This chain is Grainyhead-like protein 1 homolog, found in Caenorhabditis elegans.